The following is a 237-amino-acid chain: UPF0280 protein Mpal_1292 (237 aa).

It belongs to the UPF0280 family.

The sequence is that of UPF0280 protein Mpal_1292 from Methanosphaerula palustris (strain ATCC BAA-1556 / DSM 19958 / E1-9c).